The following is a 789-amino-acid chain: MLLRLVGAAGSRALAWPFSKLWRCGGCAGSGGTVWSSVRACGIALQGHLGRCSQQLALQGKLTSFSPRLYSKPPRGFEKFFKNKKNRKSASPGNSVPPKKEPKNAGPGGDGGNRGGKGDDFPWWKRMQKGEFPWDDKDFRSLAVLGAGVAAGFLYFYFRDPGKEITWKHFVQYYLARGLVDRLEVVNKQFVRVIPVPGTTSERFVWFNIGSVDTFERNLESAQWELGIEPTNQAAVVYTTESDGSFLRSLVPTLVLVSILLYAMRRGPMGTGRGGRGGGLFSVGETTAKILKNNIDVRFADVAGCEEAKLEIMEFVNFLKNPKQYQDLGAKIPKGAMLTGPPGTGKTLLAKATAGEANVPFITVNGSEFLEMFVGVGPARVRDMFAMARKHAPCILFIDEIDAIGRKRGRGHLGGQSEQENTLNQMLVEMDGFNSSTNVVVLAGTNRPDILDPALTRPGRFDRQIYIGPPDIKGRSSIFKVHLRPLKLDGSLSKDALSRKLAALTPGFTGADISNVCNEAALIAARHLSPSVQERHFEQAIERVIGGLEKKTQVLQPSEKTTVAYHEAGHAVVGWFLEHADPLLKVSIIPRGKGLGYAQYLPREQFLYTREQLFDRMCMMLGGRVAEQLFFGQITTGAQDDLRKVTQSAYAQIVQFGMSEKLGQVSFDFPRQGETMVEKPYSEATAQLIDEEVRCLVRSAYNRTLELLTQCREQVEKVGRRLLEKEVLEKADMIELLGPRPFAEKSTYEEFVEGTGSLEEDTSLPEGLKDWNKGREEGGTERGLQESPV.

The transit peptide at 1–70 (MLLRLVGAAG…KLTSFSPRLY (70 aa)) directs the protein to the mitochondrion. The tract at residues 81-121 (FKNKKNRKSASPGNSVPPKKEPKNAGPGGDGGNRGGKGDDF) is disordered. Residues 106–115 (GPGGDGGNRG) are compositionally biased toward gly residues. The next 2 membrane-spanning stretches (helical) occupy residues 139-158 (FRSL…YFYF) and 246-264 (FLRS…LYAM). Residues Val-302, Ala-303, Thr-344, Gly-345, Lys-346, Thr-347, Leu-348, and His-482 each coordinate ATP. Zn(2+) is bound at residue His-566. Glu-567 is a catalytic residue. Zn(2+)-binding residues include His-570 and Asp-641. The tract at residues 749 to 789 (EEFVEGTGSLEEDTSLPEGLKDWNKGREEGGTERGLQESPV) is disordered. The span at 767–789 (GLKDWNKGREEGGTERGLQESPV) shows a compositional bias: basic and acidic residues.

The protein in the N-terminal section; belongs to the AAA ATPase family. In the C-terminal section; belongs to the peptidase M41 family. As to quaternary structure, homooligomer. Forms heterohexamers with Spg7 and Afg3l1. The m-AAA protease is either composed of homohexamers of Afg3l2 or heterohexamers of Afg3l1, Afg3l2 and/or Spg7. Requires Zn(2+) as cofactor.

The protein localises to the mitochondrion inner membrane. The catalysed reaction is ATP + H2O = ADP + phosphate + H(+). Functionally, catalytic component of the m-AAA protease, a protease that plays a key role in proteostasis of inner mitochondrial membrane proteins, and which is essential for axonal and neuron development. Afg3l1 possesses both ATPase and protease activities: the ATPase activity is required to unfold substrates, threading them into the internal proteolytic cavity for hydrolysis into small peptide fragments. The m-AAA protease exerts a dual role in the mitochondrial inner membrane: it mediates the processing of specific regulatory proteins and ensures protein quality control by degrading misfolded polypeptides. Required for SPG7 maturation into its active mature form after SPG7 cleavage by mitochondrial-processing peptidase (MPP). The sequence is that of Mitochondrial inner membrane m-AAA protease component AFG3L1 from Mus musculus (Mouse).